The primary structure comprises 350 residues: NADH-quinone oxidoreductase subunit H (350 aa).

8 consecutive transmembrane segments (helical) span residues 5–25 (FIIEKSVVIVVVFAVTMIMAM), 76–96 (FLFVVGPAIAMSTALMTSAVI), 118–138 (IALLYIFGVLSVGVYGIMIGG), 162–182 (IAMGLSMIALLMMTGTMSLKV), 190–210 (MNWNVFYQPLSFLIFLICSFA), 243–263 (LFAEYASMFISSTIISVLFFG), 284–304 (LLGIAVLFVKICFFIFFYMWV), and 319–339 (LGWRILIPLSIINIMITGAVI).

This sequence belongs to the complex I subunit 1 family. In terms of assembly, NDH-1 is composed of 14 different subunits. Subunits NuoA, H, J, K, L, M, N constitute the membrane sector of the complex.

It is found in the cell inner membrane. It carries out the reaction a quinone + NADH + 5 H(+)(in) = a quinol + NAD(+) + 4 H(+)(out). In terms of biological role, NDH-1 shuttles electrons from NADH, via FMN and iron-sulfur (Fe-S) centers, to quinones in the respiratory chain. The immediate electron acceptor for the enzyme in this species is believed to be ubiquinone. Couples the redox reaction to proton translocation (for every two electrons transferred, four hydrogen ions are translocated across the cytoplasmic membrane), and thus conserves the redox energy in a proton gradient. This subunit may bind ubiquinone. The chain is NADH-quinone oxidoreductase subunit H from Flavobacterium johnsoniae (strain ATCC 17061 / DSM 2064 / JCM 8514 / BCRC 14874 / CCUG 350202 / NBRC 14942 / NCIMB 11054 / UW101) (Cytophaga johnsonae).